Reading from the N-terminus, the 315-residue chain is MLKNKILATTLSVSLLAPLANPLLENAKAANDTEDIGKGSDIEIIKRTEDKTSNKWGVTQNIQFDFVKDKKYNKDALILKMQGFISSRTTYYNYKKTNHVKAMRWPFQYNIGLKTNDKYVSLINYLPKNKIESTNVSQTLGYNIGGNFQSAPSLGGNGSFNYSKSISYTQQNYVSEVEQQNSKSVLWGVKANSFATESGQKSAFDSDLFVGYKPHSKDPRDYFVPDSELPPLVQSGFNPSFIATVSHEKGSSDTSEFEITYGRNMDVTHAIKRSTHYGNSYLDGHRVHNAFVNRNYTVKYEVNWKTHEIKVKGQN.

Residues 1–29 form the signal peptide; sequence MLKNKILATTLSVSLLAPLANPLLENAKA.

This sequence belongs to the aerolysin family. Toxicity requires sequential binding and synergistic association of a class S and a class F component which form heterooligomeric complexes. HlgC (class S) associates with HlgB (class F) thus forming an CB toxin.

Functionally, toxin that seems to act by forming pores in the membrane of the cell. Has a hemolytic and a leucotoxic activity. The sequence is that of Gamma-hemolysin component C (hlgC) from Staphylococcus aureus (strain Mu50 / ATCC 700699).